A 947-amino-acid polypeptide reads, in one-letter code: Protein translocase subunit SecA (947 aa).

ATP is bound by residues Gln-87, 105–109, and Asp-494; that span reads GEGKT. Residues 860–947 form a disordered region; it reads TAPKPLPTQE…NRAPKSKRKR (88 aa). Positions 870–885 are enriched in low complexity; the sequence is AAARTTGTAAPTALRA. 2 stretches are compositionally biased toward basic and acidic residues: residues 903–914 and 922–931; these read EDGKAKATRDSA and ASRRERREAA.

The protein belongs to the SecA family. As to quaternary structure, monomer and homodimer. Part of the essential Sec protein translocation apparatus which comprises SecA, SecYEG and auxiliary proteins SecDF. Other proteins may also be involved.

It is found in the cell membrane. It localises to the cytoplasm. The enzyme catalyses ATP + H2O + cellular proteinSide 1 = ADP + phosphate + cellular proteinSide 2.. Part of the Sec protein translocase complex. Interacts with the SecYEG preprotein conducting channel. Has a central role in coupling the hydrolysis of ATP to the transfer of proteins into and across the cell membrane, serving as an ATP-driven molecular motor driving the stepwise translocation of polypeptide chains across the membrane. The polypeptide is Protein translocase subunit SecA (Rhodococcus erythropolis (strain PR4 / NBRC 100887)).